We begin with the raw amino-acid sequence, 611 residues long: Dihydroxy-acid dehydratase (611 aa).

Mg(2+) is bound at residue aspartate 81. Position 122 (cysteine 122) interacts with [2Fe-2S] cluster. 2 residues coordinate Mg(2+): aspartate 123 and lysine 124. Lysine 124 is subject to N6-carboxylysine. Cysteine 195 serves as a coordination point for [2Fe-2S] cluster. A Mg(2+)-binding site is contributed by glutamate 491. Serine 517 functions as the Proton acceptor in the catalytic mechanism.

This sequence belongs to the IlvD/Edd family. As to quaternary structure, homodimer. [2Fe-2S] cluster serves as cofactor. Requires Mg(2+) as cofactor.

The catalysed reaction is (2R)-2,3-dihydroxy-3-methylbutanoate = 3-methyl-2-oxobutanoate + H2O. The enzyme catalyses (2R,3R)-2,3-dihydroxy-3-methylpentanoate = (S)-3-methyl-2-oxopentanoate + H2O. Its pathway is amino-acid biosynthesis; L-isoleucine biosynthesis; L-isoleucine from 2-oxobutanoate: step 3/4. It participates in amino-acid biosynthesis; L-valine biosynthesis; L-valine from pyruvate: step 3/4. Functionally, functions in the biosynthesis of branched-chain amino acids. Catalyzes the dehydration of (2R,3R)-2,3-dihydroxy-3-methylpentanoate (2,3-dihydroxy-3-methylvalerate) into 2-oxo-3-methylpentanoate (2-oxo-3-methylvalerate) and of (2R)-2,3-dihydroxy-3-methylbutanoate (2,3-dihydroxyisovalerate) into 2-oxo-3-methylbutanoate (2-oxoisovalerate), the penultimate precursor to L-isoleucine and L-valine, respectively. This chain is Dihydroxy-acid dehydratase, found in Brucella canis (strain ATCC 23365 / NCTC 10854 / RM-666).